The primary structure comprises 467 residues: Bifunctional enzyme LpxC/FabZ (467 aa).

The tract at residues 1–306 is UDP-3-O-acyl-N-acetylglucosamine deacetylase; that stretch reads MLIHQRTLQN…FVKQLKKYAD (306 aa). Zn(2+) is bound by residues histidine 79, histidine 264, and aspartate 268. Histidine 291 functions as the Proton donor in the catalytic mechanism. A 3-hydroxyacyl-[acyl-carrier-protein] dehydratase region spans residues 307 to 467; the sequence is RNKLARQYQH…LMATVMEKKN (161 aa). Histidine 370 is a catalytic residue.

The protein in the N-terminal section; belongs to the LpxC family. In the C-terminal section; belongs to the thioester dehydratase family. Zn(2+) serves as cofactor.

The protein localises to the cytoplasm. It carries out the reaction a UDP-3-O-[(3R)-3-hydroxyacyl]-N-acetyl-alpha-D-glucosamine + H2O = a UDP-3-O-[(3R)-3-hydroxyacyl]-alpha-D-glucosamine + acetate. The catalysed reaction is a (3R)-hydroxyacyl-[ACP] = a (2E)-enoyl-[ACP] + H2O. The protein operates within glycolipid biosynthesis; lipid IV(A) biosynthesis; lipid IV(A) from (3R)-3-hydroxytetradecanoyl-[acyl-carrier-protein] and UDP-N-acetyl-alpha-D-glucosamine: step 2/6. Its function is as follows. Catalyzes the hydrolysis of UDP-3-O-myristoyl-N-acetylglucosamine to form UDP-3-O-myristoylglucosamine and acetate, the committed step in lipid A biosynthesis. Functionally, involved in unsaturated fatty acids biosynthesis. Catalyzes the dehydration of short chain beta-hydroxyacyl-ACPs and long chain saturated and unsaturated beta-hydroxyacyl-ACPs. This chain is Bifunctional enzyme LpxC/FabZ (lpxC/fabZ), found in Chlorobaculum tepidum (strain ATCC 49652 / DSM 12025 / NBRC 103806 / TLS) (Chlorobium tepidum).